A 734-amino-acid polypeptide reads, in one-letter code: Predicted GPI-anchored protein 49 (734 aa).

The N-terminal stretch at 1-16 is a signal peptide; that stretch reads MNYITSLLLLSSNTFL. N-linked (GlcNAc...) asparagine glycosylation is found at Asn27, Asn56, Asn68, and Asn71. The tract at residues 78-145 is disordered; that stretch reads DNSDTDIDDS…NESDTQNEND (68 aa). Low complexity predominate over residues 87–98; the sequence is SSSNSEDVSSND. Asn105, Asn118, Asn136, and Asn180 each carry an N-linked (GlcNAc...) asparagine glycan. Acidic residues predominate over residues 110–129; sequence FSDESDEGNDSDDNGDEVEN. Residues 130-141 show a composition bias toward polar residues; it reads MENNQANESDTQ. 2 disordered regions span residues 216-262 and 331-360; these read SPKS…LKSK and DANPTEEYDSGDGKENTQQNPIPEKMRLPT. Basic residues predominate over residues 228–259; it reads SRKKTLKSKSKSKSSKLKHKSRKSHKRRPKLL. N-linked (GlcNAc...) asparagine glycosylation is found at Asn388 and Asn427. The tract at residues 447–479 is disordered; sequence PPRYSNHHSEFTVERPPRPSRTKKRPRIKAKKT. Positions 453 to 463 are enriched in basic and acidic residues; sequence HHSEFTVERPP. A compositionally biased stretch (basic residues) spans 464–479; that stretch reads RPSRTKKRPRIKAKKT. N-linked (GlcNAc...) asparagine glycosylation is present at Asn517. The tract at residues 582–653 is disordered; the sequence is KPQETKLHSP…STTSTKPNDQ (72 aa). Residues 592–611 show a composition bias toward low complexity; sequence TSTDTKSSKLMSSSSSNNNK. The span at 620–631 shows a compositional bias: polar residues; sequence EYNQTQESTSYN. Residues Asn622 and Asn631 are each glycosylated (N-linked (GlcNAc...) asparagine). Positions 632–650 are enriched in low complexity; it reads TTKAVPKTSVVSSTTSTKP. Residue Ser707 is the site of GPI-anchor amidated serine attachment. Residues 708–734 constitute a propeptide, removed in mature form; sequence ASQNLSFSVLGLIILLLLLPGLLIIIM. Asn711 carries N-linked (GlcNAc...) asparagine glycosylation.

Its subcellular location is the cell membrane. This chain is Predicted GPI-anchored protein 49 (PGA49), found in Candida albicans (strain SC5314 / ATCC MYA-2876) (Yeast).